A 201-amino-acid chain; its full sequence is Oligoribonuclease (201 aa).

Positions 20-183 constitute an Exonuclease domain; the sequence is LVWLDMEMTG…ADIHESIDEL (164 aa). Tyr141 is an active-site residue.

This sequence belongs to the oligoribonuclease family.

It localises to the cytoplasm. 3'-to-5' exoribonuclease specific for small oligoribonucleotides. This chain is Oligoribonuclease, found in Burkholderia mallei (strain NCTC 10229).